Here is a 144-residue protein sequence, read N- to C-terminus: Interleukin-3 (144 aa).

Residues 1 to 17 (MSSLSILHLLLLLLALH) form the signal peptide.

Belongs to the IL-3 family. Monomer.

It localises to the secreted. Granulocyte/macrophage colony-stimulating factors are cytokines that act in hematopoiesis by controlling the production, differentiation, and function of 2 related white cell populations of the blood, the granulocytes and the monocytes-macrophages. Functionally, this CSF induces granulocytes, macrophages, mast cells, stem cells, erythroid cells, eosinophils and megakaryocytes. The chain is Interleukin-3 (IL3) from Bos taurus (Bovine).